The following is a 276-amino-acid chain: Type II pantothenate kinase (276 aa).

Residue 8-15 (DAGGTLTK) coordinates ATP. Glutamate 76 serves as the catalytic Proton acceptor. ATP is bound by residues threonine 105, 127–131 (GGTIM), phenylalanine 143, and serine 230.

Belongs to the type II pantothenate kinase family. In terms of assembly, homodimer.

The protein localises to the cytoplasm. It catalyses the reaction (R)-pantothenate + ATP = (R)-4'-phosphopantothenate + ADP + H(+). The protein operates within cofactor biosynthesis; coenzyme A biosynthesis; CoA from (R)-pantothenate: step 1/5. Its function is as follows. Catalyzes the phosphorylation of pantothenate (Pan), the first step in CoA biosynthesis. The chain is Type II pantothenate kinase from Bacillus cereus (strain ZK / E33L).